Reading from the N-terminus, the 338-residue chain is Uroporphyrinogen decarboxylase (338 aa).

Substrate contacts are provided by residues R21–R25, D71, Y146, S201, and H316.

The protein belongs to the uroporphyrinogen decarboxylase family. As to quaternary structure, homodimer.

It localises to the cytoplasm. It carries out the reaction uroporphyrinogen III + 4 H(+) = coproporphyrinogen III + 4 CO2. The protein operates within porphyrin-containing compound metabolism; protoporphyrin-IX biosynthesis; coproporphyrinogen-III from 5-aminolevulinate: step 4/4. Functionally, catalyzes the decarboxylation of four acetate groups of uroporphyrinogen-III to yield coproporphyrinogen-III. The protein is Uroporphyrinogen decarboxylase of Rickettsia akari (strain Hartford).